Reading from the N-terminus, the 898-residue chain is Serine/threonine-protein kinase TAO3 (898 aa).

The Protein kinase domain maps to Phe24–Ile277. ATP is bound by residues Ile30–Val38 and Lys53. Asp147 acts as the Proton acceptor in catalysis. Disordered stretches follow at residues Thr316–Asp372 and Asp405–Ser424. Phosphoserine occurs at positions 324, 331, 343, 346, and 349. Positions Ser349 to Ser366 are enriched in low complexity. At Thr357 the chain carries Phosphothreonine. Ser359 bears the Phosphoserine mark. Basic and acidic residues predominate over residues Asp405–Pro416. Position 442 is a phosphoserine (Ser442). 3 coiled-coil regions span residues Glu452–Asn502, Phe548–Leu649, and Ile753–Glu871. A disordered region spans residues Glu565–Glu596. Lys830 carries the N6-acetyllysine modification.

It belongs to the protein kinase superfamily. STE Ser/Thr protein kinase family. STE20 subfamily. Self-associates. Interacts with ERN1 and TRAF2. Interaction with TRAF2 is facilitated under ER stress conditions, such as treatment with tunicamycin, and may promote TRAF2 phosphorylation. Interacts (via N-terminus) with STK25; the interaction promotes STK25 abundance at the level of protein expression and/or stability. In terms of processing, autophosphorylated. Phosphorylation at Ser-324 by ATM following DNA damage is required for activation of the p38/MAPK14 stress-activated MAPK cascade. Phosphorylated at Ser-324 and on Tyr residues during T cell activation. Phosphorylated by LRRK2. Ubiquitously expressed, with a higher expression in the retina.

Its subcellular location is the cytoplasm. It is found in the cell membrane. It localises to the membrane raft. The protein resides in the lipid droplet. The enzyme catalyses L-seryl-[protein] + ATP = O-phospho-L-seryl-[protein] + ADP + H(+). It catalyses the reaction L-threonyl-[protein] + ATP = O-phospho-L-threonyl-[protein] + ADP + H(+). Functionally, serine/threonine-protein kinase that acts as a regulator of the p38/MAPK14 stress-activated MAPK cascade and of the MAPK8/JNK cascade. In response to DNA damage, involved in the G2/M transition DNA damage checkpoint by activating the p38/MAPK14 stress-activated MAPK cascade, probably by mediating phosphorylation of upstream MAP2K3 and MAP2K6 kinases. Inhibits basal activity of the MAPK8/JNK cascade and diminishes its activation in response to epidermal growth factor (EGF). Positively regulates canonical T cell receptor (TCR) signaling by preventing early PTPN6/SHP1-mediated inactivation of LCK, ensuring sustained TCR signaling that is required for optimal activation and differentiation of T cells. Phosphorylates PTPN6/SHP1 on 'Thr-396', leading to its polyubiquitination and subsequent proteasomal degradation. Required for cell surface expression of metalloprotease ADAM10 on type 1 transitional B cells which is necessary for their NOTCH-mediated development into marginal zone B cells. Also required for the NOTCH-mediated terminal differentiation of splenic conventional type 2 dendritic cells. Positively regulates osteoblast differentiation by acting as an upstream activator of the JNK pathway. Promotes JNK signaling in hepatocytes and positively regulates hepatocyte lipid storage by inhibiting beta-oxidation and triacylglycerol secretion while enhancing lipid synthesis. Restricts age-associated inflammation by negatively regulating differentiation of macrophages and their production of pro-inflammatory cytokines. Plays a role in negatively regulating the abundance of regulatory T cells in white adipose tissue. This is Serine/threonine-protein kinase TAO3 (Taok3) from Rattus norvegicus (Rat).